The chain runs to 340 residues: S-adenosylmethionine:tRNA ribosyltransferase-isomerase (340 aa).

It belongs to the QueA family. As to quaternary structure, monomer.

Its subcellular location is the cytoplasm. It carries out the reaction 7-aminomethyl-7-carbaguanosine(34) in tRNA + S-adenosyl-L-methionine = epoxyqueuosine(34) in tRNA + adenine + L-methionine + 2 H(+). The protein operates within tRNA modification; tRNA-queuosine biosynthesis. In terms of biological role, transfers and isomerizes the ribose moiety from AdoMet to the 7-aminomethyl group of 7-deazaguanine (preQ1-tRNA) to give epoxyqueuosine (oQ-tRNA). The sequence is that of S-adenosylmethionine:tRNA ribosyltransferase-isomerase from Chlorobaculum parvum (strain DSM 263 / NCIMB 8327) (Chlorobium vibrioforme subsp. thiosulfatophilum).